The chain runs to 269 residues: Formamidopyrimidine-DNA glycosylase (269 aa).

P2 (schiff-base intermediate with DNA) is an active-site residue. Residue E3 is the Proton donor of the active site. K57 serves as the catalytic Proton donor; for beta-elimination activity. Residues H90, R109, and R150 each contribute to the DNA site. The FPG-type zinc finger occupies 235–269; the sequence is NVYGRKGEPCEACGKAIESKVIGQRNTFFCTRCQR. The Proton donor; for delta-elimination activity role is filled by R259.

Belongs to the FPG family. In terms of assembly, monomer. Zn(2+) serves as cofactor.

The catalysed reaction is Hydrolysis of DNA containing ring-opened 7-methylguanine residues, releasing 2,6-diamino-4-hydroxy-5-(N-methyl)formamidopyrimidine.. It catalyses the reaction 2'-deoxyribonucleotide-(2'-deoxyribose 5'-phosphate)-2'-deoxyribonucleotide-DNA = a 3'-end 2'-deoxyribonucleotide-(2,3-dehydro-2,3-deoxyribose 5'-phosphate)-DNA + a 5'-end 5'-phospho-2'-deoxyribonucleoside-DNA + H(+). Involved in base excision repair of DNA damaged by oxidation or by mutagenic agents. Acts as a DNA glycosylase that recognizes and removes damaged bases. Has a preference for oxidized purines, such as 7,8-dihydro-8-oxoguanine (8-oxoG). Has AP (apurinic/apyrimidinic) lyase activity and introduces nicks in the DNA strand. Cleaves the DNA backbone by beta-delta elimination to generate a single-strand break at the site of the removed base with both 3'- and 5'-phosphates. The chain is Formamidopyrimidine-DNA glycosylase from Alteromonas mediterranea (strain DSM 17117 / CIP 110805 / LMG 28347 / Deep ecotype).